We begin with the raw amino-acid sequence, 129 residues long: Putative transmembrane protein 10 (129 aa).

A run of 3 helical transmembrane segments spans residues 3–23 (NFSYFSTIFSIALMSSNAFAG), 27–47 (LLVGFCPCIEINTLTLFLSSL), and 85–105 (SSVLSCFTSCFVIYFYPFFVF).

The protein localises to the host membrane. This chain is Putative transmembrane protein 10 (SIFV0010), found in Sulfolobus islandicus filamentous virus (isolate Iceland/Hveragerdi) (SIFV).